The chain runs to 279 residues: Release factor glutamine methyltransferase (279 aa).

S-adenosyl-L-methionine contacts are provided by E141 and N187. Residue 187 to 190 coordinates substrate; it reads NPPY.

The protein belongs to the protein N5-glutamine methyltransferase family. PrmC subfamily.

It carries out the reaction L-glutaminyl-[peptide chain release factor] + S-adenosyl-L-methionine = N(5)-methyl-L-glutaminyl-[peptide chain release factor] + S-adenosyl-L-homocysteine + H(+). Its function is as follows. Methylates the class 1 translation termination release factors RF1/PrfA and RF2/PrfB on the glutamine residue of the universally conserved GGQ motif. The protein is Release factor glutamine methyltransferase of Corynebacterium glutamicum (strain ATCC 13032 / DSM 20300 / JCM 1318 / BCRC 11384 / CCUG 27702 / LMG 3730 / NBRC 12168 / NCIMB 10025 / NRRL B-2784 / 534).